The primary structure comprises 136 residues: Large ribosomal subunit protein eL27 (136 aa).

The KOW domain occupies 5 to 40 (MKPGKVVMVLAGRYAGRKAVIVKNIDDGTADRPYSH).

Belongs to the eukaryotic ribosomal protein eL27 family. In terms of assembly, component of the large ribosomal subunit.

It localises to the cytoplasm. It is found in the cytosol. Its subcellular location is the rough endoplasmic reticulum. Functionally, component of the large ribosomal subunit. This is Large ribosomal subunit protein eL27 (rpl27) from Hippocampus comes (Tiger tail seahorse).